The following is a 208-amino-acid chain: Holliday junction branch migration complex subunit RuvA (208 aa).

The segment at Met1–Glu67 is domain I. The segment at Thr68–Thr146 is domain II. Residues Pro147–Ser157 form a flexible linker region. Residues Ser157–Gly208 form a domain III region.

The protein belongs to the RuvA family. As to quaternary structure, homotetramer. Forms an RuvA(8)-RuvB(12)-Holliday junction (HJ) complex. HJ DNA is sandwiched between 2 RuvA tetramers; dsDNA enters through RuvA and exits via RuvB. An RuvB hexamer assembles on each DNA strand where it exits the tetramer. Each RuvB hexamer is contacted by two RuvA subunits (via domain III) on 2 adjacent RuvB subunits; this complex drives branch migration. In the full resolvosome a probable DNA-RuvA(4)-RuvB(12)-RuvC(2) complex forms which resolves the HJ.

The protein resides in the cytoplasm. The RuvA-RuvB-RuvC complex processes Holliday junction (HJ) DNA during genetic recombination and DNA repair, while the RuvA-RuvB complex plays an important role in the rescue of blocked DNA replication forks via replication fork reversal (RFR). RuvA specifically binds to HJ cruciform DNA, conferring on it an open structure. The RuvB hexamer acts as an ATP-dependent pump, pulling dsDNA into and through the RuvAB complex. HJ branch migration allows RuvC to scan DNA until it finds its consensus sequence, where it cleaves and resolves the cruciform DNA. The sequence is that of Holliday junction branch migration complex subunit RuvA from Synechococcus sp. (strain RCC307).